Reading from the N-terminus, the 375-residue chain is Carbamoyl phosphate synthase small chain (375 aa).

A CPSase region spans residues 1 to 180 (MSKALLVLED…DAYVVEPKGK (180 aa)). The L-glutamine site is built by S46, G232, and G234. The region spanning 184–375 (TVAALDLGIK…SFVELMAAQR (192 aa)) is the Glutamine amidotransferase type-1 domain. C260 serves as the catalytic Nucleophile. Residues F261, Q264, N302, G304, and F305 each coordinate L-glutamine. Residues H350 and E352 contribute to the active site.

It belongs to the CarA family. In terms of assembly, composed of two chains; the small (or glutamine) chain promotes the hydrolysis of glutamine to ammonia, which is used by the large (or ammonia) chain to synthesize carbamoyl phosphate. Tetramer of heterodimers (alpha,beta)4.

It carries out the reaction hydrogencarbonate + L-glutamine + 2 ATP + H2O = carbamoyl phosphate + L-glutamate + 2 ADP + phosphate + 2 H(+). It catalyses the reaction L-glutamine + H2O = L-glutamate + NH4(+). It functions in the pathway amino-acid biosynthesis; L-arginine biosynthesis; carbamoyl phosphate from bicarbonate: step 1/1. Its pathway is pyrimidine metabolism; UMP biosynthesis via de novo pathway; (S)-dihydroorotate from bicarbonate: step 1/3. Functionally, small subunit of the glutamine-dependent carbamoyl phosphate synthetase (CPSase). CPSase catalyzes the formation of carbamoyl phosphate from the ammonia moiety of glutamine, carbonate, and phosphate donated by ATP, constituting the first step of 2 biosynthetic pathways, one leading to arginine and/or urea and the other to pyrimidine nucleotides. The small subunit (glutamine amidotransferase) binds and cleaves glutamine to supply the large subunit with the substrate ammonia. The polypeptide is Carbamoyl phosphate synthase small chain (Mycobacterium leprae (strain TN)).